Consider the following 188-residue polypeptide: GMP synthase [glutamine-hydrolyzing] subunit A (188 aa).

A Glutamine amidotransferase type-1 domain is found at 2-188 (KIYIIDNGGQ…FKNFIEKCRR (187 aa)). Cysteine 79 (nucleophile) is an active-site residue. Active-site residues include histidine 166 and glutamate 168.

As to quaternary structure, heterodimer composed of a glutamine amidotransferase subunit (A) and a GMP-binding subunit (B).

It carries out the reaction XMP + L-glutamine + ATP + H2O = GMP + L-glutamate + AMP + diphosphate + 2 H(+). It functions in the pathway purine metabolism; GMP biosynthesis; GMP from XMP (L-Gln route): step 1/1. Functionally, catalyzes the synthesis of GMP from XMP. This is GMP synthase [glutamine-hydrolyzing] subunit A from Picrophilus torridus (strain ATCC 700027 / DSM 9790 / JCM 10055 / NBRC 100828 / KAW 2/3).